The following is a 256-amino-acid chain: Ubiquinone/menaquinone biosynthesis C-methyltransferase UbiE (256 aa).

Residues 1 to 12 (MTDPRKGDHAEP) are compositionally biased toward basic and acidic residues. The interval 1-21 (MTDPRKGDHAEPTTHFGYQDV) is disordered. S-adenosyl-L-methionine is bound by residues T79, D100, and 128-129 (DA).

It belongs to the class I-like SAM-binding methyltransferase superfamily. MenG/UbiE family.

It catalyses the reaction a 2-demethylmenaquinol + S-adenosyl-L-methionine = a menaquinol + S-adenosyl-L-homocysteine + H(+). The enzyme catalyses a 2-methoxy-6-(all-trans-polyprenyl)benzene-1,4-diol + S-adenosyl-L-methionine = a 5-methoxy-2-methyl-3-(all-trans-polyprenyl)benzene-1,4-diol + S-adenosyl-L-homocysteine + H(+). Its pathway is quinol/quinone metabolism; menaquinone biosynthesis; menaquinol from 1,4-dihydroxy-2-naphthoate: step 2/2. It functions in the pathway cofactor biosynthesis; ubiquinone biosynthesis. Methyltransferase required for the conversion of demethylmenaquinol (DMKH2) to menaquinol (MKH2) and the conversion of 2-polyprenyl-6-methoxy-1,4-benzoquinol (DDMQH2) to 2-polyprenyl-3-methyl-6-methoxy-1,4-benzoquinol (DMQH2). This is Ubiquinone/menaquinone biosynthesis C-methyltransferase UbiE from Pseudomonas entomophila (strain L48).